The following is a 466-amino-acid chain: Probable Xaa-Pro aminopeptidase pepP (466 aa).

D264, D275, E398, and E438 together coordinate Mn(2+).

This sequence belongs to the peptidase M24B family. Mn(2+) serves as cofactor.

The enzyme catalyses Release of any N-terminal amino acid, including proline, that is linked to proline, even from a dipeptide or tripeptide.. Its function is as follows. Catalyzes the removal of a penultimate prolyl residue from the N-termini of peptides. In Aspergillus clavatus (strain ATCC 1007 / CBS 513.65 / DSM 816 / NCTC 3887 / NRRL 1 / QM 1276 / 107), this protein is Probable Xaa-Pro aminopeptidase pepP (pepP).